Reading from the N-terminus, the 235-residue chain is Phosphoribosylaminoimidazole-succinocarboxamide synthase (235 aa).

It belongs to the SAICAR synthetase family.

It carries out the reaction 5-amino-1-(5-phospho-D-ribosyl)imidazole-4-carboxylate + L-aspartate + ATP = (2S)-2-[5-amino-1-(5-phospho-beta-D-ribosyl)imidazole-4-carboxamido]succinate + ADP + phosphate + 2 H(+). Its pathway is purine metabolism; IMP biosynthesis via de novo pathway; 5-amino-1-(5-phospho-D-ribosyl)imidazole-4-carboxamide from 5-amino-1-(5-phospho-D-ribosyl)imidazole-4-carboxylate: step 1/2. The polypeptide is Phosphoribosylaminoimidazole-succinocarboxamide synthase (Streptococcus pneumoniae (strain JJA)).